The following is a 775-amino-acid chain: Dipeptidyl peptidase 4 (775 aa).

The first 15 residues, 1–15, serve as a signal peptide directing secretion; it reads MKLLSLLMLAGIAQA. Residues Asn81, Asn111, Asn154, and Asn219 are each glycosylated (N-linked (GlcNAc...) asparagine). Catalysis depends on charge relay system residues Ser613, Asp690, and His725.

This sequence belongs to the peptidase S9B family.

Its subcellular location is the secreted. It catalyses the reaction Release of an N-terminal dipeptide, Xaa-Yaa-|-Zaa-, from a polypeptide, preferentially when Yaa is Pro, provided Zaa is neither Pro nor hydroxyproline.. In terms of biological role, extracellular dipeptidyl-peptidase which removes N-terminal dipeptides sequentially from polypeptides having unsubstituted N-termini provided that the penultimate residue is proline. Contributes to pathogenicity. This is Dipeptidyl peptidase 4 (DPP4) from Trichophyton rubrum (Athlete's foot fungus).